Consider the following 237-residue polypeptide: MANKRVLVKFSGEALAGEAGYGIDTKILNFISQEIKSLVEANIEVGIVIGGGNIIRGVTAAQDGIIKRTSGDYMGMLATVINGIAMQEACEHAGLQVRMQTAIKMEQIAEPYINRRAVRHLEKGRVVIFAAGTGNPFFTTDTAATLRAVEIGAEVIIKATKVDGVYDKDPNKFSDAIKLQELSYEQALNDNIKVMDDTSIALAKDNSLPILVCDMFKKGNLLDILQNGNMKNCSIVK.

9 to 12 (KFSG) provides a ligand contact to ATP. The involved in allosteric activation by GTP stretch occupies residues 17–22 (GEAGYG). Gly-51 lines the UMP pocket. ATP contacts are provided by Gly-52 and Arg-56. UMP is bound by residues Asp-72 and 133 to 140 (TGNPFFTT). Residues Thr-160, Tyr-166, and Asp-169 each coordinate ATP.

It belongs to the UMP kinase family. In terms of assembly, homohexamer.

It is found in the cytoplasm. It carries out the reaction UMP + ATP = UDP + ADP. Its pathway is pyrimidine metabolism; CTP biosynthesis via de novo pathway; UDP from UMP (UMPK route): step 1/1. Allosterically activated by GTP. Inhibited by UTP. Catalyzes the reversible phosphorylation of UMP to UDP. The protein is Uridylate kinase of Sulfurimonas denitrificans (strain ATCC 33889 / DSM 1251) (Thiomicrospira denitrificans (strain ATCC 33889 / DSM 1251)).